The chain runs to 357 residues: DNA replication and repair protein RecF (357 aa).

30–37 (GANGSGKT) is an ATP binding site.

It belongs to the RecF family.

The protein localises to the cytoplasm. The RecF protein is involved in DNA metabolism; it is required for DNA replication and normal SOS inducibility. RecF binds preferentially to single-stranded, linear DNA. It also seems to bind ATP. This is DNA replication and repair protein RecF from Salmonella paratyphi A (strain ATCC 9150 / SARB42).